We begin with the raw amino-acid sequence, 291 residues long: 29 kDa ribonucleoprotein B, chloroplastic (291 aa).

An RRM 1 domain is found at 87 to 165 (LKLFVGNLPF…RAIRVNAGPA (79 aa)). Positions 164-202 (PAPAKRENSSFGGGRGGNSSYGGGRDGNSSFGGARGGRS) are disordered. Positions 166 to 206 (PAKRENSSFGGGRGGNSSYGGGRDGNSSFGGARGGRSVDSS) are linker (Gly-rich). The span at 174-189 (FGGGRGGNSSYGGGRD) shows a compositional bias: gly residues. One can recognise an RRM 2 domain in the interval 207–285 (NRVYVGNLSW…RSIRVSAAEE (79 aa)).

It is found in the plastid. The protein resides in the chloroplast. Functionally, could be involved in splicing and/or processing of chloroplast RNA's. This is 29 kDa ribonucleoprotein B, chloroplastic from Nicotiana sylvestris (Wood tobacco).